The primary structure comprises 148 residues: Protein E6 (148 aa).

2 zinc fingers span residues Cys29–Cys65 and Cys102–Cys138.

This sequence belongs to the papillomaviridae E6 protein family. Forms homodimers. Interacts with ubiquitin-protein ligase UBE3A/E6-AP; this interaction stimulates UBE3A ubiquitin activity. Interacts with host TP53 and EP300; this interaction inhibits TP53 activity.

It localises to the host cytoplasm. It is found in the host nucleus. In terms of biological role, plays a major role in the induction and maintenance of cellular transformation. E6 associates with host UBE3A/E6-AP ubiquitin-protein ligase and modulates its activity. Sequesters tumor suppressor TP53 in the host cytoplasm and modulates its activity by interacting with host EP300 that results in the reduction of TP53 acetylation and activation. In turn, apoptosis induced by DNA damage is inhibited. E6 also protects host keratinocytes from apoptosis by mediating the degradation of host BAK1. May also inhibit host immune response. The chain is Protein E6 from Homo sapiens (Human).